The sequence spans 30 residues: Dendrotoxin B (30 aa).

Cysteines 3 and 22 form a disulfide.

This sequence belongs to the three-finger toxin family. Short-chain subfamily. Orphan group XI sub-subfamily. Contains 4 disulfide bonds. Expressed by the venom gland.

The protein localises to the secreted. Blocks voltage-gated potassium channels (Kv). This is the slowly inactivating phase of potassium efflux which is blocked by this toxin. The polypeptide is Dendrotoxin B (Dendroaspis angusticeps (Eastern green mamba)).